Here is a 480-residue protein sequence, read N- to C-terminus: MTRPLRLHPDRLFPADAGTRDIARRLYGSVKDLPIISPHGHTDPEWFAGDAPFPDATNLFLAPDHYLYRMLYSQGVPLDRLGVPSKAGPSPADPREAWRMLASNMHLFRGTPSSMWLNHVFGEVFGFEIELSAETADLYFDRIGEALQSPAFRPRALFERFNIELLATTESPTDDLRHHKAMRASGWKGRVVTAYRPDPVIDAEHEDFRASLSRFGELTGQDVESWSGYLQAHRMRRAAFMEMGATSTDHGHPTAATADLSLADAEALFRKLLSADFSPADAELFRAQMLTEMARMSLDDGLVMQIHPGSFRNHNAGLFARYGRDKGADIPTRTDYVRALKPLLDRFGNERGLSVIVFTLDESSYARELAPLAGHYPVLKLGPAWWFHDSPEGMRRFREQTTETAGFYNTVGFNDDTRAFLSIPARHDVARRIDAGFLARLVAEHRLSEDDAHETAVDLAYNLPKRAYKLDEPARTPAAA.

It belongs to the metallo-dependent hydrolases superfamily. Uronate isomerase family.

The enzyme catalyses D-glucuronate = D-fructuronate. It carries out the reaction aldehydo-D-galacturonate = keto-D-tagaturonate. It functions in the pathway carbohydrate metabolism; pentose and glucuronate interconversion. The protein is Uronate isomerase of Phenylobacterium zucineum (strain HLK1).